The sequence spans 920 residues: Plasma membrane ATPase (920 aa).

Positions 1–11 (MSDERITEKPP) are enriched in basic and acidic residues. Residues 1–71 (MSDERITEKP…AEEDDGPAAA (71 aa)) form a disordered region. The Cytoplasmic portion of the chain corresponds to 1–117 (MSDERITEKP…REESENLLVK (117 aa)). Positions 17–50 (SEGEPVPEEEVEEETEEEVPDEQSSEDDDIDGLI) are enriched in acidic residues. A helical membrane pass occupies residues 118–138 (FLMFFIGPIQFVMEAAAVLAA). Residues 139–142 (GLED) are Extracellular-facing. A helical transmembrane segment spans residues 143–162 (WVDFGVICGLLFLNAGVGFI). Residues 163-293 (QEFQAGSIVE…GQGHFTEVLN (131 aa)) lie on the Cytoplasmic side of the membrane. Residues 294–315 (GIGVILLVLVVITLLLIWTACF) form a helical membrane-spanning segment. Topologically, residues 316–326 (YRTVRIVPILR) are extracellular. The chain crosses the membrane as a helical span at residues 327–349 (YTLGITIVGVPVGLPAVVTTTMA). Residues 350–721 (GGAAYLAKKQ…IAILNHSLDI (372 aa)) are Cytoplasmic-facing. Catalysis depends on Asp380, which acts as the 4-aspartylphosphate intermediate. Mg(2+) contacts are provided by Asp636 and Asp640. A helical transmembrane segment spans residues 722–740 (DLIVFIAIFADVATLAIAY). Residues 741–756 (DNAPFSPSPVKWNLPR) are Extracellular-facing. A helical transmembrane segment spans residues 757–776 (LWGMSIMMGIILAAGTWITL). Topologically, residues 777-826 (TTMFLPKGGIIQNFGSIDGILFLEISLTENWLIFITRAVGPFWSSIPSWQ) are cytoplasmic. Residues 827 to 847 (LAGAVFVVDVVATMFTLFGWW) form a helical membrane-spanning segment. Over 848–859 (SQNWTDIVTVVR) the chain is Extracellular. The helical transmembrane segment at 860-876 (IYIWSIGIFCCLGGAYY) threads the bilayer. The Cytoplasmic segment spans residues 877-920 (LMSESETFDRLMNGKPLKENKSTRSVEDFLASMRRVSTQHEKGN).

The protein belongs to the cation transport ATPase (P-type) (TC 3.A.3) family. Type IIIA subfamily.

The protein localises to the cell membrane. The enzyme catalyses ATP + H2O + H(+)(in) = ADP + phosphate + 2 H(+)(out). Its function is as follows. The plasma membrane ATPase of plants and fungi is a hydrogen ion pump. The proton gradient it generates drives the active transport of nutrients by H(+)-symport. The resulting external acidification and/or internal alkinization may mediate growth responses. In Zygosaccharomyces rouxii, this protein is Plasma membrane ATPase.